The primary structure comprises 1022 residues: Dihydropyrimidine dehydrogenase [NADP(+)] (1022 aa).

Positions alanine 26–proline 45 are disordered. One can recognise a 4Fe-4S ferredoxin-type 1 domain in the interval glutamate 69–phenylalanine 100. Residues cysteine 79, cysteine 82, cysteine 87, and cysteine 91 each coordinate [4Fe-4S] cluster. Residue valine 129 participates in FAD binding. Positions 130, 136, 140, and 156 each coordinate [4Fe-4S] cluster. FAD-binding positions include glycine 194–alanine 198, glutamate 218–leucine 226, arginine 235, and leucine 261. NADP(+)-binding positions include alanine 340–threonine 343, arginine 364–lysine 365, arginine 371, alanine 437–glycine 439, and aspartate 481–asparagine 487. Glycine 480–threonine 489 contributes to the FAD binding site. FMN contacts are provided by residues serine 550 and lysine 574–threonine 575. Residues asparagine 609 and asparagine 668 to serine 670 each bind substrate. The active-site Proton acceptor is the cysteine 671. An FMN-binding site is contributed by lysine 709. Position 736–737 (asparagine 736–threonine 737) interacts with substrate. Residues glycine 767, threonine 793 to glycine 795, and cysteine 816 to serine 817 each bind FMN. 4Fe-4S ferredoxin-type domains lie at valine 943 to glutamate 975 and threonine 976 to arginine 1006. Positions 952, 955, 958, 962, 985, 988, 991, and 995 each coordinate [4Fe-4S] cluster.

The protein belongs to the dihydropyrimidine dehydrogenase family. In terms of assembly, homodimer. The cofactor is FAD. Requires FMN as cofactor. It depends on [4Fe-4S] cluster as a cofactor.

The protein localises to the cytoplasm. The catalysed reaction is 5,6-dihydrouracil + NADP(+) = uracil + NADPH + H(+). It catalyses the reaction 5,6-dihydrothymine + NADP(+) = thymine + NADPH + H(+). It participates in amino-acid biosynthesis; beta-alanine biosynthesis. Functionally, involved in pyrimidine base degradation. Catalyzes the reduction of uracil and thymine. Also involved the degradation of the chemotherapeutic drug 5-fluorouracil. The sequence is that of Dihydropyrimidine dehydrogenase [NADP(+)] (dpyd) from Danio rerio (Zebrafish).